An 89-amino-acid chain; its full sequence is Inner kinetochore subunit mhf2 (89 aa).

It belongs to the CENP-X/MHF2 family. The MHF histone-fold complex is a heterotetramer of 2 mhf1-mhf2 heterodimers. Component of the inner kinetochore constitutive centromere-associated network (CCAN) (also known as central kinetochore Sim4 complex in fission yeast), which is composed of at least cnl2, cnp3, cnp20, fta1, fta2, fta3, fta4, fta6, fta7, mal2, mhf1, mhf2, mis6, mis15, mis17, sim4 and wip1.

Its subcellular location is the nucleus. It is found in the cytoplasm. In terms of biological role, component of a FANCM-MHF complex that promotes gene conversion at blocked replication forks, probably by reversal of the stalled fork. FANCM-MHF promotes non-crossover recombination. This chain is Inner kinetochore subunit mhf2, found in Schizosaccharomyces pombe (strain 972 / ATCC 24843) (Fission yeast).